The chain runs to 489 residues: Glutamyl-tRNA(Gln) amidotransferase subunit A (489 aa).

Catalysis depends on charge relay system residues lysine 80 and serine 160. Residue serine 184 is the Acyl-ester intermediate of the active site.

This sequence belongs to the amidase family. GatA subfamily. Heterotrimer of A, B and C subunits.

The enzyme catalyses L-glutamyl-tRNA(Gln) + L-glutamine + ATP + H2O = L-glutaminyl-tRNA(Gln) + L-glutamate + ADP + phosphate + H(+). Functionally, allows the formation of correctly charged Gln-tRNA(Gln) through the transamidation of misacylated Glu-tRNA(Gln) in organisms which lack glutaminyl-tRNA synthetase. The reaction takes place in the presence of glutamine and ATP through an activated gamma-phospho-Glu-tRNA(Gln). The chain is Glutamyl-tRNA(Gln) amidotransferase subunit A from Wolbachia sp. subsp. Drosophila simulans (strain wRi).